Consider the following 479-residue polypeptide: Aspartyl/glutamyl-tRNA(Asn/Gln) amidotransferase subunit B (479 aa).

It belongs to the GatB/GatE family. GatB subfamily. In terms of assembly, heterotrimer of A, B and C subunits.

The enzyme catalyses L-glutamyl-tRNA(Gln) + L-glutamine + ATP + H2O = L-glutaminyl-tRNA(Gln) + L-glutamate + ADP + phosphate + H(+). It carries out the reaction L-aspartyl-tRNA(Asn) + L-glutamine + ATP + H2O = L-asparaginyl-tRNA(Asn) + L-glutamate + ADP + phosphate + 2 H(+). Its function is as follows. Allows the formation of correctly charged Asn-tRNA(Asn) or Gln-tRNA(Gln) through the transamidation of misacylated Asp-tRNA(Asn) or Glu-tRNA(Gln) in organisms which lack either or both of asparaginyl-tRNA or glutaminyl-tRNA synthetases. The reaction takes place in the presence of glutamine and ATP through an activated phospho-Asp-tRNA(Asn) or phospho-Glu-tRNA(Gln). The sequence is that of Aspartyl/glutamyl-tRNA(Asn/Gln) amidotransferase subunit B from Geobacter sp. (strain M21).